Reading from the N-terminus, the 143-residue chain is Deoxyuridine 5'-triphosphate nucleotidohydrolase (143 aa).

Residues 62 to 64 (RSG), Asn75, 79 to 81 (TID), and Lys89 contribute to the substrate site.

It belongs to the dUTPase family. It depends on Mg(2+) as a cofactor.

The enzyme catalyses dUTP + H2O = dUMP + diphosphate + H(+). It participates in pyrimidine metabolism; dUMP biosynthesis; dUMP from dCTP (dUTP route): step 2/2. This enzyme is involved in nucleotide metabolism: it produces dUMP, the immediate precursor of thymidine nucleotides and it decreases the intracellular concentration of dUTP so that uracil cannot be incorporated into DNA. This is Deoxyuridine 5'-triphosphate nucleotidohydrolase from Clostridium kluyveri (strain ATCC 8527 / DSM 555 / NBRC 12016 / NCIMB 10680 / K1).